The sequence spans 184 residues: Large ribosomal subunit protein uL6 (184 aa).

It belongs to the universal ribosomal protein uL6 family. In terms of assembly, part of the 50S ribosomal subunit.

This protein binds to the 23S rRNA, and is important in its secondary structure. It is located near the subunit interface in the base of the L7/L12 stalk, and near the tRNA binding site of the peptidyltransferase center. This chain is Large ribosomal subunit protein uL6, found in Pyrococcus furiosus (strain ATCC 43587 / DSM 3638 / JCM 8422 / Vc1).